We begin with the raw amino-acid sequence, 96 residues long: Exodeoxyribonuclease 7 small subunit (96 aa).

The segment covering Ala61–Ser79 has biased composition (basic and acidic residues). Residues Ala61 to Phe96 form a disordered region. Positions Lys80–Ser89 are enriched in low complexity.

The protein belongs to the XseB family. In terms of assembly, heterooligomer composed of large and small subunits.

The protein localises to the cytoplasm. It carries out the reaction Exonucleolytic cleavage in either 5'- to 3'- or 3'- to 5'-direction to yield nucleoside 5'-phosphates.. In terms of biological role, bidirectionally degrades single-stranded DNA into large acid-insoluble oligonucleotides, which are then degraded further into small acid-soluble oligonucleotides. The chain is Exodeoxyribonuclease 7 small subunit from Leptospira borgpetersenii serovar Hardjo-bovis (strain JB197).